A 70-amino-acid polypeptide reads, in one-letter code: TTNNNNTKAVPEAKAALKQMKLEIANELGISNYDTADKGNMTARQNGYVGGYMTKKLVEMAEQQMSGQQR.

The protein belongs to the alpha/beta-type SASP family.

In terms of biological role, SASP are bound to spore DNA. They are double-stranded DNA-binding proteins that cause DNA to change to an a-like conformation. They protect the DNA backbone from chemical and enzymatic cleavage and are thus involved in dormant spore's high resistance to UV light. The protein is Small, acid-soluble spore protein alpha of Paraclostridium bifermentans (Clostridium bifermentans).